The sequence spans 390 residues: Serpin B3 (390 aa).

Met-1 is subject to N-acetylmethionine.

Belongs to the serpin family. Ov-serpin subfamily. As to quaternary structure, interacts with MAPK8/JNK1. In terms of tissue distribution, squamous cells. Expressed in some hepatocellular carcinoma (at protein level).

It is found in the cytoplasm. May act as a papain-like cysteine protease inhibitor to modulate the host immune response against tumor cells. Also functions as an inhibitor of UV-induced apoptosis via suppression of the activity of c-Jun NH(2)-terminal kinase (JNK1). The sequence is that of Serpin B3 (SERPINB3) from Homo sapiens (Human).